The chain runs to 102 residues: Envelope glycoprotein N (102 aa).

The N-terminal stretch at 1–32 (MGKVLRKPFAKAVPLLFLAATWLLTGVLPAGA) is a signal peptide. Over 33–69 (SSPTNAAAASLTEAQDQFYSYTCNADTFSPSLTSFAS) the chain is Virion surface. A helical membrane pass occupies residues 70–90 (IWALLTLVLVIIASAIYLMYV). The Intravirion portion of the chain corresponds to 91 to 102 (CFNKFVNTLLTD).

Belongs to the herpesviridae glycoprotein N family. Interacts (via N-terminus) with gM (via N-terminus). The gM-gN heterodimer forms the gCII complex. Post-translationally, O-glycosylated. Contains alpha 2,6-sialic acid residues.

Its subcellular location is the virion membrane. The protein resides in the host membrane. It localises to the host Golgi apparatus. It is found in the host trans-Golgi network. Envelope glycoprotein necessary for proper maturation of gM and modulation of its membrane fusion activity. Also plays a critical role in virion morphogenesis. This is Envelope glycoprotein N from Epstein-Barr virus (strain AG876) (HHV-4).